Here is an 85-residue protein sequence, read N- to C-terminus: Small ribosomal subunit protein eS21 (85 aa).

The protein belongs to the eukaryotic ribosomal protein eS21 family. As to quaternary structure, component of the 40S small ribosomal subunit.

The protein localises to the cytoplasm. The protein resides in the cytosol. It is found in the rough endoplasmic reticulum. This chain is Small ribosomal subunit protein eS21 (RPS21), found in Branchiostoma belcheri (Amphioxus).